A 78-amino-acid polypeptide reads, in one-letter code: Delta-conotoxin TxVIA (78 aa).

A signal peptide spans 1–22; the sequence is MKLTCMMIVAVLFLTAWTFATA. The propeptide occupies 23 to 49; it reads DDPRNGLGNLFSNAHHEMKNPEASKLN. Intrachain disulfides connect C53–C68, C60–C72, and C67–C77. M59 is modified (methionine sulfoxide; partial).

It belongs to the conotoxin O1 superfamily. In terms of tissue distribution, expressed by the venom duct.

Its subcellular location is the secreted. Its function is as follows. Delta-conotoxins bind to site 6 of voltage-gated sodium channels (Nav) and inhibit the inactivation process. Binding of this toxin is strongly calcium-dependent but not voltage-dependent. The binding site is most likely on the extracellular side of the sodium channel. Binds receptor sites on both mollusk and rat central nervous system, but despite its high affinity binding to rat sodium channel, it has no functional effect in vivo and in vitro on it. Also has no effect on Gambusia fish. Is important in mollusk for the paralysis of the prey. Upon injection of the peptide, a subordinate lobster assumes an exaggerated dominant posture (of a 'King-Kong' lobster!). The sequence is that of Delta-conotoxin TxVIA from Conus textile (Cloth-of-gold cone).